The following is an 833-amino-acid chain: Ribosome biogenesis protein BOP1 homolog (833 aa).

The tract at residues 20-202 (NKKSEPIAVS…DSDDSSEDES (183 aa)) is disordered. The span at 36–56 (SKPTTTATTTVSKSPVSTITT) shows a compositional bias: low complexity. Composition is skewed to acidic residues over residues 90-111 (SEDDEDYESEEDDEGDDEEDVE) and 136-150 (EAEESLVEYQSEDDS). Residues 154–170 (SSKSSSSTTTTTTTTKK) show a composition bias toward low complexity. The segment covering 182–192 (KQWTNDPNQFY) has biased composition (polar residues). Residues 193 to 202 (DSDDSSEDES) show a composition bias toward acidic residues. WD repeat units lie at residues 331–370 (TKAIRMGWIKLNKKGKKGEKDKKDGNFDLWADEGEEKEKT), 488–527 (GHKARVRSISISPNGQWLASGSDDCTIKIWEVSSTRCLYS), and 529–569 (EVES…TQTE). Residues 568 to 592 (TEHSPETEKILTKPPTDSSTEQQQN) form a disordered region. Over residues 582-592 (PTDSSTEQQQN) the composition is skewed to polar residues. WD repeat units follow at residues 618-660 (HHPF…TQSP), 663-701 (KSKTPNQVTRFHPNKPIFFVADQNIIRVYDLMKQELIKK), 704-743 (TGCRYISSIDIHPQGDNVIMGGYDKKVCWFDLDLSVRPYK), 747-786 (YHKMAVRKVIYHPTLPLFASCSDDLSIHVFHGMVYDDLLQ), and 802-833 (INDLGVLDIVFHPKQPWIFSSGADSTIRLYTN).

It belongs to the WD repeat BOP1/ERB1 family.

The protein localises to the nucleus. It localises to the nucleolus. The protein resides in the nucleoplasm. In terms of biological role, required for maturation of ribosomal RNAs and formation of the large ribosomal subunit. In Dictyostelium discoideum (Social amoeba), this protein is Ribosome biogenesis protein BOP1 homolog.